A 391-amino-acid chain; its full sequence is Chorismate synthase (391 aa).

Arginine 48 contacts NADP(+). FMN contacts are provided by residues 126-128, glycine 286, 301-305, and arginine 328; these read RAS and KPTSS.

The protein belongs to the chorismate synthase family. FMNH2 serves as cofactor.

The catalysed reaction is 5-O-(1-carboxyvinyl)-3-phosphoshikimate = chorismate + phosphate. The protein operates within metabolic intermediate biosynthesis; chorismate biosynthesis; chorismate from D-erythrose 4-phosphate and phosphoenolpyruvate: step 7/7. In terms of biological role, catalyzes the anti-1,4-elimination of the C-3 phosphate and the C-6 proR hydrogen from 5-enolpyruvylshikimate-3-phosphate (EPSP) to yield chorismate, which is the branch point compound that serves as the starting substrate for the three terminal pathways of aromatic amino acid biosynthesis. This reaction introduces a second double bond into the aromatic ring system. The chain is Chorismate synthase from Saccharolobus solfataricus (strain ATCC 35092 / DSM 1617 / JCM 11322 / P2) (Sulfolobus solfataricus).